Here is a 196-residue protein sequence, read N- to C-terminus: Ribosome maturation factor RimP (196 aa).

The disordered stretch occupies residues 164–196 (LAPQKPNKPGPKKPGHDKKKPSNEPAAGKPRAE). The span at 173–182 (GPKKPGHDKK) shows a compositional bias: basic residues.

Belongs to the RimP family.

It is found in the cytoplasm. Required for maturation of 30S ribosomal subunits. The protein is Ribosome maturation factor RimP of Xanthomonas campestris pv. campestris (strain B100).